The primary structure comprises 259 residues: Peroxiredoxin-4 (259 aa).

Positions 66 to 224 (IRIRKPAPAF…AIRTLKALKF (159 aa)) constitute a Thioredoxin domain. The active-site Cysteine sulfenic acid (-SOH) intermediate is the Cys-111.

The protein belongs to the peroxiredoxin family. AhpC/Prx1 subfamily. As to quaternary structure, homodimer; disulfide-linked, upon oxidation. 5 homodimers assemble to form a ring-like decamer.

The protein localises to the cytoplasm. It localises to the endoplasmic reticulum. The catalysed reaction is a hydroperoxide + [thioredoxin]-dithiol = an alcohol + [thioredoxin]-disulfide + H2O. In terms of biological role, thiol-specific peroxidase that catalyzes the reduction of hydrogen peroxide and organic hydroperoxides to water and alcohols, respectively. Plays a role in cell protection against oxidative stress by detoxifying peroxides and as sensor of hydrogen peroxide-mediated signaling events. Regulates the activation of NF-kappa-B in the cytosol by a modulation of I-kappa-B-alpha phosphorylation. The polypeptide is Peroxiredoxin-4 (prdx4) (Dictyostelium discoideum (Social amoeba)).